The sequence spans 460 residues: Bifunctional protein GlmU (460 aa).

The segment at 1–232 (MALNVVILAA…AIEVEGANNR (232 aa)) is pyrophosphorylase. UDP-N-acetyl-alpha-D-glucosamine-binding positions include 8 to 11 (LAAG), lysine 22, glutamine 73, 78 to 79 (GT), 100 to 102 (YGD), glycine 137, glutamate 157, asparagine 172, and asparagine 230. Aspartate 102 is a binding site for Mg(2+). Residue asparagine 230 participates in Mg(2+) binding. Residues 233–253 (VQLAQLERAYQAREAEKLMLA) form a linker region. Residues 254 to 460 (GANLRDPSRI…GWQRPVKIKK (207 aa)) are N-acetyltransferase. UDP-N-acetyl-alpha-D-glucosamine-binding residues include arginine 336 and lysine 354. The active-site Proton acceptor is the histidine 366. UDP-N-acetyl-alpha-D-glucosamine-binding residues include tyrosine 369 and asparagine 380. Acetyl-CoA is bound by residues alanine 383, 389 to 390 (NY), serine 408, alanine 426, and arginine 443.

The protein in the N-terminal section; belongs to the N-acetylglucosamine-1-phosphate uridyltransferase family. This sequence in the C-terminal section; belongs to the transferase hexapeptide repeat family. Homotrimer. The cofactor is Mg(2+).

Its subcellular location is the cytoplasm. The catalysed reaction is alpha-D-glucosamine 1-phosphate + acetyl-CoA = N-acetyl-alpha-D-glucosamine 1-phosphate + CoA + H(+). The enzyme catalyses N-acetyl-alpha-D-glucosamine 1-phosphate + UTP + H(+) = UDP-N-acetyl-alpha-D-glucosamine + diphosphate. Its pathway is nucleotide-sugar biosynthesis; UDP-N-acetyl-alpha-D-glucosamine biosynthesis; N-acetyl-alpha-D-glucosamine 1-phosphate from alpha-D-glucosamine 6-phosphate (route II): step 2/2. It participates in nucleotide-sugar biosynthesis; UDP-N-acetyl-alpha-D-glucosamine biosynthesis; UDP-N-acetyl-alpha-D-glucosamine from N-acetyl-alpha-D-glucosamine 1-phosphate: step 1/1. The protein operates within bacterial outer membrane biogenesis; LPS lipid A biosynthesis. In terms of biological role, catalyzes the last two sequential reactions in the de novo biosynthetic pathway for UDP-N-acetylglucosamine (UDP-GlcNAc). The C-terminal domain catalyzes the transfer of acetyl group from acetyl coenzyme A to glucosamine-1-phosphate (GlcN-1-P) to produce N-acetylglucosamine-1-phosphate (GlcNAc-1-P), which is converted into UDP-GlcNAc by the transfer of uridine 5-monophosphate (from uridine 5-triphosphate), a reaction catalyzed by the N-terminal domain. The polypeptide is Bifunctional protein GlmU (Shewanella baltica (strain OS195)).